We begin with the raw amino-acid sequence, 498 residues long: Glycerol kinase (498 aa).

Thr-12 contributes to the ADP binding site. ATP-binding residues include Thr-12, Thr-13, and Ser-14. Residue Thr-12 coordinates sn-glycerol 3-phosphate. Arg-16 contacts ADP. Arg-82, Glu-83, Tyr-134, and Asp-243 together coordinate sn-glycerol 3-phosphate. Positions 82, 83, 134, 243, and 244 each coordinate glycerol. 2 residues coordinate ADP: Thr-265 and Gly-308. Residues Thr-265, Gly-308, Gln-312, and Gly-409 each contribute to the ATP site. 2 residues coordinate ADP: Gly-409 and Asn-413.

Belongs to the FGGY kinase family. As to quaternary structure, homotetramer and homodimer (in equilibrium).

It carries out the reaction glycerol + ATP = sn-glycerol 3-phosphate + ADP + H(+). The protein operates within polyol metabolism; glycerol degradation via glycerol kinase pathway; sn-glycerol 3-phosphate from glycerol: step 1/1. With respect to regulation, activated by phosphorylation and inhibited by fructose 1,6-bisphosphate (FBP). In terms of biological role, key enzyme in the regulation of glycerol uptake and metabolism. Catalyzes the phosphorylation of glycerol to yield sn-glycerol 3-phosphate. This is Glycerol kinase from Clostridium botulinum (strain ATCC 19397 / Type A).